A 539-amino-acid chain; its full sequence is Probable malate:quinone oxidoreductase (539 aa).

Belongs to the MQO family. FAD serves as cofactor.

It catalyses the reaction (S)-malate + a quinone = a quinol + oxaloacetate. Its pathway is carbohydrate metabolism; tricarboxylic acid cycle; oxaloacetate from (S)-malate (quinone route): step 1/1. In Sodalis glossinidius (strain morsitans), this protein is Probable malate:quinone oxidoreductase.